The chain runs to 361 residues: Cdc42 effector protein 1 (361 aa).

Residues 1–29 (MPGPQGAGGAPAMNLGKLSPVGWVSSSQG) are disordered. Residues Ser-19 and Ser-27 each carry the phosphoserine modification. Thr-34 bears the Phosphothreonine mark. Residues 38 to 52 (ISPPLGDFRHTMHVG) form the CRIB domain. At Ser-39 the chain carries Phosphoserine. Arg-53 carries the post-translational modification Omega-N-methylarginine. Phosphoserine is present on residues Ser-65, Ser-73, Ser-77, Ser-101, Ser-113, Ser-121, Ser-139, Ser-180, Ser-190, Ser-192, and Ser-195. The interval 161–186 (CTISRLPRPEKPRDRDRDSSFPAEPE) is disordered. A compositionally biased stretch (basic and acidic residues) spans 167 to 186 (PRPEKPRDRDRDSSFPAEPE). Disordered stretches follow at residues 218-300 (EGSA…SRHH) and 320-361 (SWGS…EVKV). 4 tandem repeats follow at residues 220 to 226 (SAAETPA), 229 to 235 (PAASPPA), 236 to 242 (SVANPPA), and 243 to 249 (PASSPSL). Positions 220-249 (SAAETPAPAPAASPPASVANPPAPASSPSL) are 4 X 7 AA tandem repeats of [PT]-[AT]-A-[ENT]-[PT]-[PTS]-[AG]. Phosphoserine is present on residues Ser-270, Ser-320, and Ser-323. A compositionally biased stretch (polar residues) spans 332 to 347 (QAGSRTPVPSTVQANT). Residues 351–361 (ADAEEDDEVKV) are compositionally biased toward acidic residues.

The protein belongs to the BORG/CEP family. As to quaternary structure, interacts with RHOQ and CDC42, in a GTP-dependent manner.

It is found in the endomembrane system. The protein resides in the cytoplasm. It localises to the cytoskeleton. Probably involved in the organization of the actin cytoskeleton. Induced membrane extensions in fibroblasts. The protein is Cdc42 effector protein 1 of Bos taurus (Bovine).